The sequence spans 290 residues: Light-independent protochlorophyllide reductase iron-sulfur ATP-binding protein (290 aa).

Residues 10–15 (GIGKST) and Lys39 contribute to the ATP site. Residue Ser14 coordinates Mg(2+). Positions 95 and 129 each coordinate [4Fe-4S] cluster. Residue 180–181 (NR) participates in ATP binding.

The protein belongs to the NifH/BchL/ChlL family. In terms of assembly, homodimer. Protochlorophyllide reductase is composed of three subunits; ChlL, ChlN and ChlB. It depends on [4Fe-4S] cluster as a cofactor.

It localises to the plastid. Its subcellular location is the chloroplast. The enzyme catalyses chlorophyllide a + oxidized 2[4Fe-4S]-[ferredoxin] + 2 ADP + 2 phosphate = protochlorophyllide a + reduced 2[4Fe-4S]-[ferredoxin] + 2 ATP + 2 H2O. It functions in the pathway porphyrin-containing compound metabolism; chlorophyll biosynthesis (light-independent). Component of the dark-operative protochlorophyllide reductase (DPOR) that uses Mg-ATP and reduced ferredoxin to reduce ring D of protochlorophyllide (Pchlide) to form chlorophyllide a (Chlide). This reaction is light-independent. The L component serves as a unique electron donor to the NB-component of the complex, and binds Mg-ATP. The protein is Light-independent protochlorophyllide reductase iron-sulfur ATP-binding protein of Cycas taitungensis (Prince sago).